Here is a 576-residue protein sequence, read N- to C-terminus: MNIQALLSDKVSQALIAAGAPAGSEPQVRQSAKAQFGDYQANGVMAIAKKLGMQPRQLAEKVIELLDLDGIASKVEIAGPGFINIFLDRQWVASKVEEALKAPKLGVQPVEPQTIVVDYSAPNVAKQMHVGHLRSTIIGDAAVRTLEFLGHNVIRANHVGDWGTQFGMLIAYLEKMQNENASDMGLSDLELFYQQAKKTYDEDEEFAKRARAYVVKLQSGDEYCRQMWRKLVDITMAQNQIAYDRLNVTLTKDDVMGESLYNTMLPEIVADLKAKGLAVESEGATVVYLDEYKNKDGEPMGVIIQKKDGGYLYTTTDIACAKYRYETLGADRVLYYIDSRQHQHLMQAWTIVRKAGYVPESVPLEHHMFGMMLGKDGKPFKTRSGGTVKLSDLLDEAIERAGKLIAEKNPDMPADELKQVVEAVGIGAVKYADLSKSRTTDYIFDWDNMLALDGNTAPYMQYAYTRVVSVFKRAGIDESNLTLPLVITEDREAALATRLLQFEEIITTVAREGTPHVMCSYLYDLAGLFSSFYEHCQILNADSEESRQSRLKLAMLTAKTLKQGLDTLGIQTVERM.

The 'HIGH' region motif lies at 122-132; it reads PNVAKQMHVGH.

Belongs to the class-I aminoacyl-tRNA synthetase family. Monomer.

It is found in the cytoplasm. The catalysed reaction is tRNA(Arg) + L-arginine + ATP = L-arginyl-tRNA(Arg) + AMP + diphosphate. The chain is Arginine--tRNA ligase from Yersinia enterocolitica serotype O:8 / biotype 1B (strain NCTC 13174 / 8081).